Reading from the N-terminus, the 188-residue chain is Peptidyl-tRNA hydrolase (188 aa).

Position 17 (Tyr17) interacts with tRNA. Catalysis depends on His22, which acts as the Proton acceptor. Positions 65, 67, and 113 each coordinate tRNA.

It belongs to the PTH family. In terms of assembly, monomer.

The protein resides in the cytoplasm. It catalyses the reaction an N-acyl-L-alpha-aminoacyl-tRNA + H2O = an N-acyl-L-amino acid + a tRNA + H(+). In terms of biological role, hydrolyzes ribosome-free peptidyl-tRNAs (with 1 or more amino acids incorporated), which drop off the ribosome during protein synthesis, or as a result of ribosome stalling. Catalyzes the release of premature peptidyl moieties from peptidyl-tRNA molecules trapped in stalled 50S ribosomal subunits, and thus maintains levels of free tRNAs and 50S ribosomes. The chain is Peptidyl-tRNA hydrolase from Mycoplasma pneumoniae (strain ATCC 29342 / M129 / Subtype 1) (Mycoplasmoides pneumoniae).